The chain runs to 94 residues: Progonadoliberin-3 (94 aa).

The first 23 residues, 1–23 (MEWKGRVLVQLLMLVCVLEVSLC), serve as a signal peptide directing secretion. Position 24 is a pyrrolidone carboxylic acid (Gln-24). Position 33 is a glycine amide (Gly-33).

Belongs to the GnRH family.

It is found in the secreted. Functionally, stimulates the secretion of gonadotropins. In Rutilus rutilus (Roach), this protein is Progonadoliberin-3 (gnrh3).